The following is a 177-amino-acid chain: Peptide methionine sulfoxide reductase MsrA (177 aa).

The active site involves Cys-15.

It belongs to the MsrA Met sulfoxide reductase family.

The enzyme catalyses L-methionyl-[protein] + [thioredoxin]-disulfide + H2O = L-methionyl-(S)-S-oxide-[protein] + [thioredoxin]-dithiol. It catalyses the reaction [thioredoxin]-disulfide + L-methionine + H2O = L-methionine (S)-S-oxide + [thioredoxin]-dithiol. Functionally, has an important function as a repair enzyme for proteins that have been inactivated by oxidation. Catalyzes the reversible oxidation-reduction of methionine sulfoxide in proteins to methionine. The chain is Peptide methionine sulfoxide reductase MsrA from Listeria welshimeri serovar 6b (strain ATCC 35897 / DSM 20650 / CCUG 15529 / CIP 8149 / NCTC 11857 / SLCC 5334 / V8).